The following is a 337-amino-acid chain: Protein LEG1 homolog (337 aa).

The N-terminal stretch at 1–20 (MAVLASWVWVLAGCFCAAVA) is a signal peptide. N171 is a glycosylation site (N-linked (GlcNAc...) asparagine).

Belongs to the LEG1 family.

It localises to the secreted. In terms of biological role, may be involved in early liver development. This Mus musculus (Mouse) protein is Protein LEG1 homolog.